We begin with the raw amino-acid sequence, 239 residues long: Isoprenyl transferase (239 aa).

Aspartate 16 is a catalytic residue. Aspartate 16 serves as a coordination point for Mg(2+). Residues 17 to 20, tryptophan 21, arginine 29, histidine 33, and 61 to 63 contribute to the substrate site; these read GNGR and STE. Residue asparagine 64 is the Proton acceptor of the active site. Substrate is bound by residues tryptophan 65, arginine 67, arginine 187, and 193-195; that span reads RLS. Glutamate 206 lines the Mg(2+) pocket.

This sequence belongs to the UPP synthase family. Homodimer. Mg(2+) serves as cofactor.

Its function is as follows. Catalyzes the condensation of isopentenyl diphosphate (IPP) with allylic pyrophosphates generating different type of terpenoids. The protein is Isoprenyl transferase of Lactobacillus johnsonii (strain CNCM I-12250 / La1 / NCC 533).